A 270-amino-acid chain; its full sequence is Checkpoint signal transducer rad25 (270 aa).

Phosphoserine is present on residues Ser-234 and Ser-253. A disordered region spans residues 240–270 (QSAKEEAPAAAAASENEHPEPKESTTDTVKA). Residues 254–270 (ENEHPEPKESTTDTVKA) show a composition bias toward basic and acidic residues.

Belongs to the 14-3-3 family. In terms of assembly, interacts with rad24. Interacts with byr2.

The protein resides in the cytoplasm. In terms of biological role, acts in cell cycle and stress checkpoint signaling by sequestering signal transducers regulated by the checkpoints. Required for the DNA damage checkpoint that ensures that DNA damage is repaired before mitosis is attempted. Sequesters byr2 in the cytoplasm to prevent its translocation to the plasma membrane. This is Checkpoint signal transducer rad25 from Schizosaccharomyces pombe (strain 972 / ATCC 24843) (Fission yeast).